A 213-amino-acid polypeptide reads, in one-letter code: NADH-quinone oxidoreductase subunit C (213 aa).

This sequence belongs to the complex I 30 kDa subunit family. NDH-1 is composed of 14 different subunits. Subunits NuoB, C, D, E, F, and G constitute the peripheral sector of the complex.

Its subcellular location is the cell inner membrane. It catalyses the reaction a quinone + NADH + 5 H(+)(in) = a quinol + NAD(+) + 4 H(+)(out). NDH-1 shuttles electrons from NADH, via FMN and iron-sulfur (Fe-S) centers, to quinones in the respiratory chain. The immediate electron acceptor for the enzyme in this species is believed to be ubiquinone. Couples the redox reaction to proton translocation (for every two electrons transferred, four hydrogen ions are translocated across the cytoplasmic membrane), and thus conserves the redox energy in a proton gradient. In Rhodospirillum rubrum (strain ATCC 11170 / ATH 1.1.1 / DSM 467 / LMG 4362 / NCIMB 8255 / S1), this protein is NADH-quinone oxidoreductase subunit C.